The sequence spans 498 residues: Bifunctional protein GlmU (498 aa).

Residues 1–238 (MSDAAVVILA…PALVAGVNDR (238 aa)) are pyrophosphorylase. UDP-N-acetyl-alpha-D-glucosamine is bound by residues 9 to 12 (LAAG), K23, Q80, and 85 to 86 (GT). Residue D111 participates in Mg(2+) binding. 4 residues coordinate UDP-N-acetyl-alpha-D-glucosamine: G148, E163, N178, and N236. Residue N236 participates in Mg(2+) binding. The tract at residues 239-259 (VQLADLGAELNRRVVAAHQRA) is linker. Residues 260 to 498 (GVTIVDPATT…TAKPAPATGE (239 aa)) form an N-acetyltransferase region. R341 and K359 together coordinate UDP-N-acetyl-alpha-D-glucosamine. H371 (proton acceptor) is an active-site residue. Y374 and N385 together coordinate UDP-N-acetyl-alpha-D-glucosamine. Acetyl-CoA is bound by residues A388, 394 to 395 (NY), S413, and A431. The disordered stretch occupies residues 470–498 (AAEAAAADGDTAAADRAAATAKPAPATGE).

This sequence in the N-terminal section; belongs to the N-acetylglucosamine-1-phosphate uridyltransferase family. In the C-terminal section; belongs to the transferase hexapeptide repeat family. As to quaternary structure, homotrimer. Mg(2+) serves as cofactor.

Its subcellular location is the cytoplasm. It catalyses the reaction alpha-D-glucosamine 1-phosphate + acetyl-CoA = N-acetyl-alpha-D-glucosamine 1-phosphate + CoA + H(+). The enzyme catalyses N-acetyl-alpha-D-glucosamine 1-phosphate + UTP + H(+) = UDP-N-acetyl-alpha-D-glucosamine + diphosphate. It functions in the pathway nucleotide-sugar biosynthesis; UDP-N-acetyl-alpha-D-glucosamine biosynthesis; N-acetyl-alpha-D-glucosamine 1-phosphate from alpha-D-glucosamine 6-phosphate (route II): step 2/2. It participates in nucleotide-sugar biosynthesis; UDP-N-acetyl-alpha-D-glucosamine biosynthesis; UDP-N-acetyl-alpha-D-glucosamine from N-acetyl-alpha-D-glucosamine 1-phosphate: step 1/1. The protein operates within bacterial outer membrane biogenesis; LPS lipid A biosynthesis. Catalyzes the last two sequential reactions in the de novo biosynthetic pathway for UDP-N-acetylglucosamine (UDP-GlcNAc). The C-terminal domain catalyzes the transfer of acetyl group from acetyl coenzyme A to glucosamine-1-phosphate (GlcN-1-P) to produce N-acetylglucosamine-1-phosphate (GlcNAc-1-P), which is converted into UDP-GlcNAc by the transfer of uridine 5-monophosphate (from uridine 5-triphosphate), a reaction catalyzed by the N-terminal domain. This Mycolicibacterium gilvum (strain PYR-GCK) (Mycobacterium gilvum (strain PYR-GCK)) protein is Bifunctional protein GlmU.